We begin with the raw amino-acid sequence, 221 residues long: Alpha-ketoglutarate-dependent dioxygenase alkB homolog 7, mitochondrial (221 aa).

Residues M1 to S23 constitute a mitochondrion transit peptide. Residues H121 and D123 each contribute to the Fe cation site. Y165 is a binding site for 2-oxoglutarate. H177 contacts Fe cation. Residues R197–S199 and R203 each bind 2-oxoglutarate.

Belongs to the alkB family. The cofactor is Fe(2+). In terms of tissue distribution, widely expressed.

The protein localises to the mitochondrion matrix. In terms of biological role, may function as protein hydroxylase; can catalyze auto-hydroxylation at Leu-110 (in vitro), but this activity may be due to the absence of the true substrate. Required to induce programmed necrosis in response to DNA damage caused by cytotoxic alkylating agents. Acts by triggering the collapse of mitochondrial membrane potential and loss of mitochondrial function that leads to energy depletion and cell death. ALKBH7-mediated necrosis is probably required to prevent the accumulation of cells with DNA damage. Does not display DNA demethylase activity. Involved in fatty acid metabolism. In Mus musculus (Mouse), this protein is Alpha-ketoglutarate-dependent dioxygenase alkB homolog 7, mitochondrial (Alkbh7).